Reading from the N-terminus, the 395-residue chain is Acetate kinase (395 aa).

Asn-8 lines the Mg(2+) pocket. Lys-15 contacts ATP. Residue Arg-89 coordinates substrate. Catalysis depends on Asp-146, which acts as the Proton donor/acceptor. ATP is bound by residues His-206–Gly-210, Asp-281–Arg-283, and Gly-329–Asn-333. Residue Glu-382 participates in Mg(2+) binding.

The protein belongs to the acetokinase family. As to quaternary structure, homodimer. The cofactor is Mg(2+). Mn(2+) is required as a cofactor.

Its subcellular location is the cytoplasm. It catalyses the reaction acetate + ATP = acetyl phosphate + ADP. It functions in the pathway metabolic intermediate biosynthesis; acetyl-CoA biosynthesis; acetyl-CoA from acetate: step 1/2. Its function is as follows. Catalyzes the formation of acetyl phosphate from acetate and ATP. Can also catalyze the reverse reaction. The sequence is that of Acetate kinase from Shouchella clausii (strain KSM-K16) (Alkalihalobacillus clausii).